Consider the following 403-residue polypeptide: Sorting nexin-32 (403 aa).

In terms of domain architecture, PX spans 20–168 (LQGDSSLQVE…VFLEYGQDLS (149 aa)). A coiled-coil region spans residues 258 to 335 (NQLRTSFLKL…KARTRNREVR (78 aa)).

It belongs to the sorting nexin family.

In terms of biological role, may be involved in several stages of intracellular trafficking. This is Sorting nexin-32 (SNX32) from Homo sapiens (Human).